A 464-amino-acid polypeptide reads, in one-letter code: ATP synthase subunit beta (464 aa).

148–155 (GGAGVGKT) serves as a coordination point for ATP.

It belongs to the ATPase alpha/beta chains family. In terms of assembly, F-type ATPases have 2 components, CF(1) - the catalytic core - and CF(0) - the membrane proton channel. CF(1) has five subunits: alpha(3), beta(3), gamma(1), delta(1), epsilon(1). CF(0) has three main subunits: a(1), b(2) and c(9-12). The alpha and beta chains form an alternating ring which encloses part of the gamma chain. CF(1) is attached to CF(0) by a central stalk formed by the gamma and epsilon chains, while a peripheral stalk is formed by the delta and b chains.

It is found in the cell inner membrane. It catalyses the reaction ATP + H2O + 4 H(+)(in) = ADP + phosphate + 5 H(+)(out). In terms of biological role, produces ATP from ADP in the presence of a proton gradient across the membrane. The catalytic sites are hosted primarily by the beta subunits. This chain is ATP synthase subunit beta, found in Marinobacter nauticus (strain ATCC 700491 / DSM 11845 / VT8) (Marinobacter aquaeolei).